The chain runs to 512 residues: Ribose import ATP-binding protein RbsA (512 aa).

ABC transporter domains lie at 6–242 (LELR…VNRE) and 252–496 (VPAG…TGAQ). Position 38-45 (38-45 (GENGAGKS)) interacts with ATP.

It belongs to the ABC transporter superfamily. Ribose importer (TC 3.A.1.2.1) family. As to quaternary structure, the complex is composed of an ATP-binding protein (RbsA), two transmembrane proteins (RbsC) and a solute-binding protein (RbsB).

It localises to the cell inner membrane. The enzyme catalyses D-ribose(out) + ATP + H2O = D-ribose(in) + ADP + phosphate + H(+). Its function is as follows. Part of the ABC transporter complex RbsABC involved in ribose import. Responsible for energy coupling to the transport system. The chain is Ribose import ATP-binding protein RbsA from Pseudomonas putida (strain ATCC 47054 / DSM 6125 / CFBP 8728 / NCIMB 11950 / KT2440).